The sequence spans 188 residues: dCTP deaminase (188 aa).

Residues 111 to 116, 135 to 137, Gln-156, Tyr-170, Lys-179, and Gln-180 contribute to the dCTP site; these read KSTYAR and TLE. The active-site Proton donor/acceptor is Glu-137.

This sequence belongs to the dCTP deaminase family. Homotrimer.

The catalysed reaction is dCTP + H2O + H(+) = dUTP + NH4(+). It functions in the pathway pyrimidine metabolism; dUMP biosynthesis; dUMP from dCTP (dUTP route): step 1/2. Functionally, catalyzes the deamination of dCTP to dUTP. The polypeptide is dCTP deaminase (Rickettsia canadensis (strain McKiel)).